The sequence spans 275 residues: Large ribosomal subunit protein uL2 (275 aa).

Residues 223–260 form a disordered region; that stretch reads VAMNPVDHPHGGGEGRTSGGRHPVSPWGLPTKGYKTRS.

Belongs to the universal ribosomal protein uL2 family. As to quaternary structure, part of the 50S ribosomal subunit. Forms a bridge to the 30S subunit in the 70S ribosome.

Functionally, one of the primary rRNA binding proteins. Required for association of the 30S and 50S subunits to form the 70S ribosome, for tRNA binding and peptide bond formation. It has been suggested to have peptidyltransferase activity; this is somewhat controversial. Makes several contacts with the 16S rRNA in the 70S ribosome. The chain is Large ribosomal subunit protein uL2 from Legionella pneumophila (strain Paris).